Reading from the N-terminus, the 258-residue chain is Peptidase inhibitor 15 (258 aa).

The signal sequence occupies residues 1-21 (MIEMISISAAFLLSLLCETCG). Positions 22–60 (LVLPKSSDLAIAASNYTIIKPDLSARLDPVKAPKARRKR) are excised as a propeptide. 2 N-linked (GlcNAc...) asparagine glycosylation sites follow: asparagine 36 and asparagine 124. An SCP domain is found at 71–211 (VEYHNQVRGK…RRAVYLVCNY (141 aa)).

It belongs to the CRISP family.

The protein localises to the secreted. Serine protease inhibitor which displays weak inhibitory activity against trypsin. May be involved in facial patterning during embryonic development. This chain is Peptidase inhibitor 15 (pi15), found in Xenopus laevis (African clawed frog).